The primary structure comprises 421 residues: MSDNRHQNLAVIGHVDHGKSTMVGRLLYETGSVPEHVIEQHKEEAEEKGKGGFEFAYVMDNLAEERERGVTIDIAHQEFTTDEYEFTIVDCPGHRDFVKNMITGASQADNAVLVVAADDGVAPQTREHVFLSRTLGIDELIVAVNKMDVVDYDESKYNEVVSGVKDLFGQVGFNPDDAKFIATSAFEGDNVSDHSDNTPWYDGPTLLEALNGLPVPQPPTDADLRLPIQDVYTISGIGTVPVGRIETGVMNTGDNVSFQPSDVGGEVKTIEMHHEEVPNAEPGDNVGFNVRGIGKDDIRRGDVCGPADDPPSVADTFQAQVVVMQHPSVITAGYTPVFHAHTAQVACTIESIDKKMDPASGETQEENPDFIQSGDAAVVTVRPQKPLSLEPSSEIPELGSFAVRDMGQTIAAGKVLDVDEA.

The region spanning Asn-4–Thr-220 is the tr-type G domain. Residues Gly-13–Ser-20 form a G1 region. Gly-13–Ser-20 serves as a coordination point for GTP. Ser-20 contacts Mg(2+). The G2 stretch occupies residues Gly-69–Asp-73. The interval Asp-90–Gly-93 is G3. GTP is bound by residues Asp-90–His-94 and Asn-145–Asp-148. Positions Asn-145 to Asp-148 are G4. Residues Ser-184 to Phe-186 form a G5 region.

Belongs to the TRAFAC class translation factor GTPase superfamily. Classic translation factor GTPase family. EF-Tu/EF-1A subfamily.

The protein localises to the cytoplasm. It carries out the reaction GTP + H2O = GDP + phosphate + H(+). In terms of biological role, GTP hydrolase that promotes the GTP-dependent binding of aminoacyl-tRNA to the A-site of ribosomes during protein biosynthesis. This is Elongation factor 1-alpha from Halobacterium salinarum (strain ATCC 700922 / JCM 11081 / NRC-1) (Halobacterium halobium).